A 121-amino-acid polypeptide reads, in one-letter code: Protein GAT4 (121 aa).

Residues 29 to 48 (EAQHGLPRNADSQPARPRTG) form a disordered region. The GATA-type zinc-finger motif lies at 53 to 79 (CGQCGEIKTSLQWREGPNGAACLCNAC).

This Saccharomyces cerevisiae (strain ATCC 204508 / S288c) (Baker's yeast) protein is Protein GAT4 (GAT4).